The following is a 40-amino-acid chain: Large ribosomal subunit protein bL36A (40 aa).

This sequence belongs to the bacterial ribosomal protein bL36 family.

The sequence is that of Large ribosomal subunit protein bL36A from Paenarthrobacter aurescens (strain TC1).